The sequence spans 270 residues: Urease accessory protein UreD (270 aa).

The protein belongs to the UreD family. UreD, UreF and UreG form a complex that acts as a GTP-hydrolysis-dependent molecular chaperone, activating the urease apoprotein by helping to assemble the nickel containing metallocenter of UreC. The UreE protein probably delivers the nickel.

It is found in the cytoplasm. Functionally, required for maturation of urease via the functional incorporation of the urease nickel metallocenter. The sequence is that of Urease accessory protein UreD from Actinobacillus pleuropneumoniae serotype 7 (strain AP76).